An 837-amino-acid chain; its full sequence is Protein translocase subunit SecA (837 aa).

Residues Q85, 103–107 (GEGKT), and D493 each bind ATP. Positions 821, 823, 832, and 833 each coordinate Zn(2+).

Belongs to the SecA family. As to quaternary structure, monomer and homodimer. Part of the essential Sec protein translocation apparatus which comprises SecA, SecYEG and auxiliary proteins SecDF. Other proteins may also be involved. The cofactor is Zn(2+).

Its subcellular location is the cell membrane. The protein resides in the cytoplasm. The enzyme catalyses ATP + H2O + cellular proteinSide 1 = ADP + phosphate + cellular proteinSide 2.. In terms of biological role, part of the Sec protein translocase complex. Interacts with the SecYEG preprotein conducting channel. Has a central role in coupling the hydrolysis of ATP to the transfer of proteins into and across the cell membrane, serving as an ATP-driven molecular motor driving the stepwise translocation of polypeptide chains across the membrane. The polypeptide is Protein translocase subunit SecA (Streptococcus pneumoniae serotype 19F (strain G54)).